We begin with the raw amino-acid sequence, 665 residues long: Protein kinase domain-containing protein ppk2 (665 aa).

4 disordered regions span residues Pro42 to Phe63, Gly82 to Ser152, Leu187 to Asn217, and Ala286 to Pro343. The segment covering Gly82 to Trp104 has biased composition (polar residues). Low complexity-rich tracts occupy residues Ser137–Ser152 and Thr206–Asn217. A compositionally biased stretch (polar residues) spans Ser294 to Val316. A Phosphoserine modification is found at Ser358. Positions Tyr388–Leu637 constitute a Protein kinase domain. ATP-binding positions include Ile394–Thr402 and Lys417.

It localises to the cytoplasm. This chain is Protein kinase domain-containing protein ppk2 (ppk2), found in Schizosaccharomyces pombe (strain 972 / ATCC 24843) (Fission yeast).